The sequence spans 373 residues: Queuine tRNA-ribosyltransferase (373 aa).

Asp-90 (proton acceptor) is an active-site residue. Substrate-binding positions include 90 to 94, Asp-144, Gln-193, and Gly-220; that span reads DSGGF. The RNA binding stretch occupies residues 251-257; sequence GVGTPED. Asp-270 acts as the Nucleophile in catalysis. An RNA binding; important for wobble base 34 recognition region spans residues 275–279; the sequence is TRNAR. Residues Cys-308, Cys-310, Cys-313, and His-339 each contribute to the Zn(2+) site.

Belongs to the queuine tRNA-ribosyltransferase family. In terms of assembly, homodimer. Within each dimer, one monomer is responsible for RNA recognition and catalysis, while the other monomer binds to the replacement base PreQ1. It depends on Zn(2+) as a cofactor.

The enzyme catalyses 7-aminomethyl-7-carbaguanine + guanosine(34) in tRNA = 7-aminomethyl-7-carbaguanosine(34) in tRNA + guanine. The protein operates within tRNA modification; tRNA-queuosine biosynthesis. Its function is as follows. Catalyzes the base-exchange of a guanine (G) residue with the queuine precursor 7-aminomethyl-7-deazaguanine (PreQ1) at position 34 (anticodon wobble position) in tRNAs with GU(N) anticodons (tRNA-Asp, -Asn, -His and -Tyr). Catalysis occurs through a double-displacement mechanism. The nucleophile active site attacks the C1' of nucleotide 34 to detach the guanine base from the RNA, forming a covalent enzyme-RNA intermediate. The proton acceptor active site deprotonates the incoming PreQ1, allowing a nucleophilic attack on the C1' of the ribose to form the product. After dissociation, two additional enzymatic reactions on the tRNA convert PreQ1 to queuine (Q), resulting in the hypermodified nucleoside queuosine (7-(((4,5-cis-dihydroxy-2-cyclopenten-1-yl)amino)methyl)-7-deazaguanosine). This Campylobacter lari (strain RM2100 / D67 / ATCC BAA-1060) protein is Queuine tRNA-ribosyltransferase.